The sequence spans 154 residues: Small ribosomal subunit protein bS6 (154 aa).

The segment at 94 to 154 is disordered; the sequence is VKQEGPLPTP…SSQGKESQKS (61 aa). Residues 103–112 are compositionally biased toward polar residues; sequence PRSSNKGYNQ. Positions 113-139 are enriched in basic and acidic residues; that stretch reads SEKKDIESIDSTNKSEFKEEANDKKTA. The span at 140–154 shows a compositional bias: polar residues; that stretch reads TSESTSSQGKESQKS.

This sequence belongs to the bacterial ribosomal protein bS6 family.

Binds together with bS18 to 16S ribosomal RNA. The protein is Small ribosomal subunit protein bS6 of Prochlorococcus marinus subsp. pastoris (strain CCMP1986 / NIES-2087 / MED4).